Consider the following 172-residue polypeptide: Ribosome maturation factor RimM (172 aa).

The PRC barrel domain occupies 96–168 (EGEFYYHQII…RVDVELMEGL (73 aa)).

This sequence belongs to the RimM family. Binds ribosomal protein uS19.

It is found in the cytoplasm. Its function is as follows. An accessory protein needed during the final step in the assembly of 30S ribosomal subunit, possibly for assembly of the head region. Essential for efficient processing of 16S rRNA. May be needed both before and after RbfA during the maturation of 16S rRNA. It has affinity for free ribosomal 30S subunits but not for 70S ribosomes. The chain is Ribosome maturation factor RimM from Streptococcus pyogenes serotype M6 (strain ATCC BAA-946 / MGAS10394).